Reading from the N-terminus, the 312-residue chain is Tetraacyldisaccharide 4'-kinase (312 aa).

An ATP-binding site is contributed by 60–67 (IAGGSGKT).

It belongs to the LpxK family.

It catalyses the reaction a lipid A disaccharide + ATP = a lipid IVA + ADP + H(+). It functions in the pathway glycolipid biosynthesis; lipid IV(A) biosynthesis; lipid IV(A) from (3R)-3-hydroxytetradecanoyl-[acyl-carrier-protein] and UDP-N-acetyl-alpha-D-glucosamine: step 6/6. Transfers the gamma-phosphate of ATP to the 4'-position of a tetraacyldisaccharide 1-phosphate intermediate (termed DS-1-P) to form tetraacyldisaccharide 1,4'-bis-phosphate (lipid IVA). The sequence is that of Tetraacyldisaccharide 4'-kinase from Helicobacter acinonychis (strain Sheeba).